Consider the following 181-residue polypeptide: ATP synthase subunit delta (181 aa).

The protein belongs to the ATPase delta chain family. As to quaternary structure, F-type ATPases have 2 components, F(1) - the catalytic core - and F(0) - the membrane proton channel. F(1) has five subunits: alpha(3), beta(3), gamma(1), delta(1), epsilon(1). F(0) has three main subunits: a(1), b(2) and c(10-14). The alpha and beta chains form an alternating ring which encloses part of the gamma chain. F(1) is attached to F(0) by a central stalk formed by the gamma and epsilon chains, while a peripheral stalk is formed by the delta and b chains.

It is found in the cell inner membrane. F(1)F(0) ATP synthase produces ATP from ADP in the presence of a proton or sodium gradient. F-type ATPases consist of two structural domains, F(1) containing the extramembraneous catalytic core and F(0) containing the membrane proton channel, linked together by a central stalk and a peripheral stalk. During catalysis, ATP synthesis in the catalytic domain of F(1) is coupled via a rotary mechanism of the central stalk subunits to proton translocation. In terms of biological role, this protein is part of the stalk that links CF(0) to CF(1). It either transmits conformational changes from CF(0) to CF(1) or is implicated in proton conduction. The protein is ATP synthase subunit delta of Chlorobium phaeobacteroides (strain DSM 266 / SMG 266 / 2430).